A 254-amino-acid chain; its full sequence is Transmembrane protein 269 (254 aa).

5 consecutive transmembrane segments (helical) span residues 44 to 64 (IINA…FCSF), 69 to 89 (YCAS…GTMT), 113 to 135 (LASA…IYVL), 171 to 191 (LTKG…LFMI), and 210 to 230 (IVYI…TAFY).

Its subcellular location is the membrane. The sequence is that of Transmembrane protein 269 from Mus musculus (Mouse).